The primary structure comprises 143 residues: Transmembrane protein 207 (143 aa).

Positions 1–29 (MSTSSPFRVASKIVTAGCLCLPLFQRVLS) are cleaved as a signal peptide. Residues 52-72 (IWFFLLIFLVVLLCGVVLFCL) form a helical membrane-spanning segment.

Interacts with WWOX.

The protein localises to the membrane. The sequence is that of Transmembrane protein 207 from Mus musculus (Mouse).